A 419-amino-acid polypeptide reads, in one-letter code: UDP-N-acetylglucosamine 1-carboxyvinyltransferase (419 aa).

Phosphoenolpyruvate is bound at residue 22-23 (KN). Arg-92 serves as a coordination point for UDP-N-acetyl-alpha-D-glucosamine. The active-site Proton donor is Cys-116. 2-(S-cysteinyl)pyruvic acid O-phosphothioketal is present on Cys-116. Residues Asp-306 and Ile-328 each contribute to the UDP-N-acetyl-alpha-D-glucosamine site.

Belongs to the EPSP synthase family. MurA subfamily.

Its subcellular location is the cytoplasm. The enzyme catalyses phosphoenolpyruvate + UDP-N-acetyl-alpha-D-glucosamine = UDP-N-acetyl-3-O-(1-carboxyvinyl)-alpha-D-glucosamine + phosphate. It participates in cell wall biogenesis; peptidoglycan biosynthesis. Cell wall formation. Adds enolpyruvyl to UDP-N-acetylglucosamine. The chain is UDP-N-acetylglucosamine 1-carboxyvinyltransferase from Pseudoalteromonas translucida (strain TAC 125).